Consider the following 140-residue polypeptide: UPF0102 protein Ppro_1186 (140 aa).

The disordered stretch occupies residues 1–27; that stretch reads MKRPGDGRQESPSSTARPDNRNTGSRG. Residues 10–25 are compositionally biased toward polar residues; it reads ESPSSTARPDNRNTGS.

It belongs to the UPF0102 family.

In Pelobacter propionicus (strain DSM 2379 / NBRC 103807 / OttBd1), this protein is UPF0102 protein Ppro_1186.